The following is a 345-amino-acid chain: NADPH dehydrogenase (345 aa).

23-26 (SPMC) serves as a coordination point for FMN. A substrate-binding site is contributed by Y28. Positions 60 and 102 each coordinate FMN. Residue 164–167 (HGAH) participates in substrate binding. FMN is bound by residues R215 and 307–308 (GR).

Belongs to the NADH:flavin oxidoreductase/NADH oxidase family. NamA subfamily. In terms of assembly, homotetramer. Requires FMN as cofactor.

It catalyses the reaction A + NADPH + H(+) = AH2 + NADP(+). Functionally, catalyzes the reduction of the double bond of an array of alpha,beta-unsaturated aldehydes and ketones. It also reduces the nitro group of nitroester and nitroaromatic compounds. It could have a role in detoxification processes. This chain is NADPH dehydrogenase, found in Bacillus anthracis (strain CDC 684 / NRRL 3495).